The chain runs to 414 residues: Gamma-glutamyl phosphate reductase (414 aa).

The protein belongs to the gamma-glutamyl phosphate reductase family.

It is found in the cytoplasm. It catalyses the reaction L-glutamate 5-semialdehyde + phosphate + NADP(+) = L-glutamyl 5-phosphate + NADPH + H(+). It participates in amino-acid biosynthesis; L-proline biosynthesis; L-glutamate 5-semialdehyde from L-glutamate: step 2/2. In terms of biological role, catalyzes the NADPH-dependent reduction of L-glutamate 5-phosphate into L-glutamate 5-semialdehyde and phosphate. The product spontaneously undergoes cyclization to form 1-pyrroline-5-carboxylate. In Thermoanaerobacter pseudethanolicus (strain ATCC 33223 / 39E) (Clostridium thermohydrosulfuricum), this protein is Gamma-glutamyl phosphate reductase.